A 1108-amino-acid polypeptide reads, in one-letter code: MAPTLLQKLFNKRGGGAASAQARPPKEEPAFSWSCSEFGLSDIRLLVYQDCERRGRQVMFDSRAVQKMEEAAAQKAEDVPIKMSARCCQESSSSSGSSSSGSSSSHGFGGSLQHAKQQLPKYQYTRPASDVSMLGEMMFGSVAMSYKGSTLKIHYIRSPPQLMISKVFSATMGSFCGSTNNLQDSFEYINQDPQAGKLNTNQYNLGPFRTGSNLAHSTPVDMPSRGQNEDRDSGIARSASLSSLLITPFPSPSSSTSSSSSYQRRWLRSQTTSLENGIFPRRSTDETFSLAEETCSSNPAMVRRKKIAISIIFSLCEREAAQRDFQDFFFSHFPLFESHMNRLKGAIEKAMISCRKISESSLRVQFYVSRLMEALGEFRGTIWNLYSVPRIAEPVWLTMMSNTLEKNQLCQRFLKEFILLIEQVNKNQFFAALLTAVLTYHLAWVPTVMPVDHPPIKAFSEKRTSQSVNMLAKTHPYNPLWAQLGDLYGAIGSPVRLTRTVVIGKQKDLVQRILYVLTYFLRCSELQENQLSWSGNPSEDDQVINGSKIITALEKGEVEESEYVVVTVSSEPALVPPILPQGTAERRSPEPTVVAEISEGVNTSELGHKPEKNRCKRPEQNSEASSMGFQEAEPDSSWIPQGIFCEDKQNDQEATQDCSSSPPSCEVPRVRRRMDQQTLHSKLHGETLKKRAEQSAAWPCPDRHSQEDPPVEKVTFHIGSSISPESDFESRTKRMEERLKACGHFHGASASASSSMDTGLTQEQQGSGCSFKADFEKDITPQDHSSGGEGVSEDRGLRANMTHAVGQLSQVDGPLAHSLCAAESGRRLLEQTRDVQLKGYKGPSSEPVPNRCRQQGGLLIAADVPYGDASGKGNYRSEGDIPRNESLDSALGDSDDEACVLALLELGHSCDRTEESLEVELPLPRSQSTSKANVRNFGRSLLAGYCATYMPDLVLHGTSSDEKLKQCLAADLVHTVHHPVLDEPIAEAVCIIADTDKWTVQVATSQRKVTDTMKLGQDVLVSSQVSSLLQSILQLYKLHLPADFCIMHLEDRLQEMYLKSKMLSEYLRGHTRVHVKELSVVLGIESNDLPLLTAIASTHSPYVAQILL.

The uDENN FNIP1/2-type domain occupies 38–456; it reads FGLSDIRLLV…TVMPVDHPPI (419 aa). Disordered stretches follow at residues 89-112, 209-233, 598-635, and 649-671; these read QESSSSSGSSSSGSSSSHGFGGSL, RTGSNLAHSTPVDMPSRGQNEDRDS, SEGVNTSELGHKPEKNRCKRPEQNSEASSMGFQEAEPD, and QNDQEATQDCSSSPPSCEVPRVR. A compositionally biased stretch (low complexity) spans 91–106; it reads SSSSSGSSSSGSSSSH. A phosphoserine mark is found at Ser212 and Ser217. One can recognise a cDENN FNIP1/2-type domain in the interval 464-1034; the sequence is TSQSVNMLAK…VSSLLQSILQ (571 aa). The interaction with PRKAA1 stretch occupies residues 540 to 905; sequence DDQVINGSKI…DEACVLALLE (366 aa). The segment covering 606-620 has biased composition (basic and acidic residues); it reads LGHKPEKNRCKRPEQ. Residues 652–663 are compositionally biased toward polar residues; sequence QEATQDCSSSPP. 3 positions are modified to phosphoserine: Ser720, Ser721, and Ser723. Positions 1044-1099 constitute a dDENN FNIP1/2-type domain; sequence FCIMHLEDRLQEMYLKSKMLSEYLRGHTRVHVKELSVVLGIESNDLPLLTAIASTH.

The protein belongs to the FNIP family. In terms of assembly, homodimer and homomultimer. Heterodimer and heteromultimer with FNIP1. Interacts (via C-terminus) with FLCN (via C-terminus). Phosphorylated FLCN is preferentially bound. Component of the lysosomal folliculin complex (LFC), composed of FLCN, FNIP1 (or FNIP2), RagA/RRAGA or RagB/RRAGB GDP-bound, RagC/RRAGC or RagD/RRAGD GTP-bound, and Ragulator. Interacts with PRKAA1, PRKAB1 and PRKAG1 subunits of 5'-AMP-activated protein kinase. Interacts with HSP70, HSP90AA1, STIP1, PTGES3, CDC37, BRAF, GCR and CDK4. In terms of processing, phosphorylated by AMPK.

Its subcellular location is the lysosome membrane. It localises to the cytoplasm. Functionally, binding partner of the GTPase-activating protein FLCN: involved in the cellular response to amino acid availability by regulating the non-canonical mTORC1 signaling cascade controlling the MiT/TFE factors TFEB and TFE3. Required to promote FLCN recruitment to lysosomes and interaction with Rag GTPases, leading to activation of the non-canonical mTORC1 signaling. In low-amino acid conditions, component of the lysosomal folliculin complex (LFC) on the membrane of lysosomes, which inhibits the GTPase-activating activity of FLCN, thereby inactivating mTORC1 and promoting nuclear translocation of TFEB and TFE3. Upon amino acid restimulation, disassembly of the LFC complex liberates the GTPase-activating activity of FLCN, leading to activation of mTORC1 and subsequent inactivation of TFEB and TFE3. Together with FLCN, regulates autophagy: following phosphorylation by ULK1, interacts with GABARAP and promotes autophagy. In addition to its role in mTORC1 signaling, also acts as a co-chaperone of HSP90AA1/Hsp90: inhibits the ATPase activity of HSP90AA1/Hsp90, leading to activate both kinase and non-kinase client proteins of HSP90AA1/Hsp90. Acts as a scaffold to load client protein FLCN onto HSP90AA1/Hsp90. Competes with the activating co-chaperone AHSA1 for binding to HSP90AA1, thereby providing a reciprocal regulatory mechanism for chaperoning of client proteins. May play a role in the signal transduction pathway of apoptosis induced by O6-methylguanine-mispaired lesions. This is Folliculin-interacting protein 2 from Mus musculus (Mouse).